The chain runs to 362 residues: Protein RecA (362 aa).

67–74 (GPESSGKT) lines the ATP pocket. Over residues 337-356 (VADAPADSAPAPVAAVAPKA) the composition is skewed to low complexity. Residues 337–362 (VADAPADSAPAPVAAVAPKASARKSA) form a disordered region.

It belongs to the RecA family.

The protein resides in the cytoplasm. Can catalyze the hydrolysis of ATP in the presence of single-stranded DNA, the ATP-dependent uptake of single-stranded DNA by duplex DNA, and the ATP-dependent hybridization of homologous single-stranded DNAs. It interacts with LexA causing its activation and leading to its autocatalytic cleavage. The protein is Protein RecA of Clavibacter michiganensis subsp. michiganensis (strain NCPPB 382).